Consider the following 152-residue polypeptide: Nucleoside diphosphate kinase (152 aa).

Residues Lys-11, Phe-59, Arg-87, Thr-93, Arg-104, and Asn-114 each contribute to the ATP site. His-117 functions as the Pros-phosphohistidine intermediate in the catalytic mechanism.

Belongs to the NDK family. Homotetramer. Mg(2+) serves as cofactor.

The protein resides in the cytoplasm. The catalysed reaction is a 2'-deoxyribonucleoside 5'-diphosphate + ATP = a 2'-deoxyribonucleoside 5'-triphosphate + ADP. The enzyme catalyses a ribonucleoside 5'-diphosphate + ATP = a ribonucleoside 5'-triphosphate + ADP. Major role in the synthesis of nucleoside triphosphates other than ATP. The ATP gamma phosphate is transferred to the NDP beta phosphate via a ping-pong mechanism, using a phosphorylated active-site intermediate. This Prochlorococcus marinus (strain MIT 9301) protein is Nucleoside diphosphate kinase.